Here is a 91-residue protein sequence, read N- to C-terminus: Small ribosomal subunit protein bS18 (91 aa).

It belongs to the bacterial ribosomal protein bS18 family. In terms of assembly, part of the 30S ribosomal subunit. Forms a tight heterodimer with protein bS6.

Binds as a heterodimer with protein bS6 to the central domain of the 16S rRNA, where it helps stabilize the platform of the 30S subunit. This Syntrophotalea carbinolica (strain DSM 2380 / NBRC 103641 / GraBd1) (Pelobacter carbinolicus) protein is Small ribosomal subunit protein bS18.